Here is a 362-residue protein sequence, read N- to C-terminus: Peptide chain release factor 1 (362 aa).

Q236 carries the post-translational modification N5-methylglutamine.

The protein belongs to the prokaryotic/mitochondrial release factor family. Methylated by PrmC. Methylation increases the termination efficiency of RF1.

It localises to the cytoplasm. Functionally, peptide chain release factor 1 directs the termination of translation in response to the peptide chain termination codons UAG and UAA. This chain is Peptide chain release factor 1, found in Lactobacillus gasseri (strain ATCC 33323 / DSM 20243 / BCRC 14619 / CIP 102991 / JCM 1131 / KCTC 3163 / NCIMB 11718 / NCTC 13722 / AM63).